We begin with the raw amino-acid sequence, 365 residues long: 3-isopropylmalate dehydrogenase (365 aa).

Residue 78–91 (GKKWNNLPIEKRPE) coordinates NAD(+). 4 residues coordinate substrate: Arg-99, Arg-109, Arg-139, and Asp-228. Mg(2+)-binding residues include Asp-228, Asp-252, and Asp-256. An NAD(+)-binding site is contributed by 286 to 298 (GSAPDIAGKNIAN).

Belongs to the isocitrate and isopropylmalate dehydrogenases family. LeuB type 1 subfamily. Homodimer. The cofactor is Mg(2+). Mn(2+) is required as a cofactor.

Its subcellular location is the cytoplasm. The enzyme catalyses (2R,3S)-3-isopropylmalate + NAD(+) = 4-methyl-2-oxopentanoate + CO2 + NADH. It functions in the pathway amino-acid biosynthesis; L-leucine biosynthesis; L-leucine from 3-methyl-2-oxobutanoate: step 3/4. In terms of biological role, catalyzes the oxidation of 3-carboxy-2-hydroxy-4-methylpentanoate (3-isopropylmalate) to 3-carboxy-4-methyl-2-oxopentanoate. The product decarboxylates to 4-methyl-2 oxopentanoate. This is 3-isopropylmalate dehydrogenase from Buchnera aphidicola subsp. Macrosiphoniella ludovicianae.